Consider the following 187-residue polypeptide: Hypoxanthine/guanine phosphoribosyltransferase (187 aa).

The protein belongs to the purine/pyrimidine phosphoribosyltransferase family. Archaeal HPRT subfamily. As to quaternary structure, homodimer.

The protein localises to the cytoplasm. The enzyme catalyses IMP + diphosphate = hypoxanthine + 5-phospho-alpha-D-ribose 1-diphosphate. The catalysed reaction is GMP + diphosphate = guanine + 5-phospho-alpha-D-ribose 1-diphosphate. It participates in purine metabolism; IMP biosynthesis via salvage pathway; IMP from hypoxanthine: step 1/1. Its function is as follows. Catalyzes a salvage reaction resulting in the formation of IMP that is energically less costly than de novo synthesis. The sequence is that of Hypoxanthine/guanine phosphoribosyltransferase from Methanopyrus kandleri (strain AV19 / DSM 6324 / JCM 9639 / NBRC 100938).